Reading from the N-terminus, the 369-residue chain is Glutamate 5-kinase (369 aa).

An ATP-binding site is contributed by K9. The substrate site is built by S49, D136, and N148. Residues 168–169 (TD) and 210–216 (TGGMLTK) contribute to the ATP site. In terms of domain architecture, PUA spans 275-355 (QGSIWVDKGA…KGVLIYRDDW (81 aa)).

This sequence belongs to the glutamate 5-kinase family.

It is found in the cytoplasm. The enzyme catalyses L-glutamate + ATP = L-glutamyl 5-phosphate + ADP. It participates in amino-acid biosynthesis; L-proline biosynthesis; L-glutamate 5-semialdehyde from L-glutamate: step 1/2. Catalyzes the transfer of a phosphate group to glutamate to form L-glutamate 5-phosphate. This Streptococcus pneumoniae serotype 4 (strain ATCC BAA-334 / TIGR4) protein is Glutamate 5-kinase.